The chain runs to 343 residues: Uroporphyrinogen decarboxylase (343 aa).

Residues 23–27 (RQAGR), phenylalanine 42, aspartate 73, tyrosine 150, serine 205, and histidine 322 each bind substrate.

This sequence belongs to the uroporphyrinogen decarboxylase family. In terms of assembly, homodimer.

The protein resides in the cytoplasm. It carries out the reaction uroporphyrinogen III + 4 H(+) = coproporphyrinogen III + 4 CO2. It functions in the pathway porphyrin-containing compound metabolism; protoporphyrin-IX biosynthesis; coproporphyrinogen-III from 5-aminolevulinate: step 4/4. With respect to regulation, inhibited by N-ethyl-maleimide and phenylglyoxal. Its function is as follows. Catalyzes the decarboxylation of four acetate groups of uroporphyrinogen-III to yield coproporphyrinogen-III. The sequence is that of Uroporphyrinogen decarboxylase (hemE) from Cereibacter sphaeroides (strain ATCC 17023 / DSM 158 / JCM 6121 / CCUG 31486 / LMG 2827 / NBRC 12203 / NCIMB 8253 / ATH 2.4.1.) (Rhodobacter sphaeroides).